The primary structure comprises 403 residues: S-adenosylmethionine synthase (403 aa).

Position 17 (histidine 17) interacts with ATP. Aspartate 19 contributes to the Mg(2+) binding site. Glutamate 45 contributes to the K(+) binding site. Residues glutamate 58 and glutamine 104 each coordinate L-methionine. The interval 104–114 (QSPDIAQGVDT) is flexible loop. ATP contacts are provided by residues 179-181 (DGK), 250-251 (KF), aspartate 259, 265-266 (RK), alanine 282, and lysine 286. Residue aspartate 259 participates in L-methionine binding. Lysine 290 serves as a coordination point for L-methionine.

Belongs to the AdoMet synthase family. As to quaternary structure, homotetramer; dimer of dimers. It depends on Mg(2+) as a cofactor. K(+) is required as a cofactor.

It localises to the cytoplasm. The catalysed reaction is L-methionine + ATP + H2O = S-adenosyl-L-methionine + phosphate + diphosphate. It participates in amino-acid biosynthesis; S-adenosyl-L-methionine biosynthesis; S-adenosyl-L-methionine from L-methionine: step 1/1. Its function is as follows. Catalyzes the formation of S-adenosylmethionine (AdoMet) from methionine and ATP. The overall synthetic reaction is composed of two sequential steps, AdoMet formation and the subsequent tripolyphosphate hydrolysis which occurs prior to release of AdoMet from the enzyme. In Mycolicibacterium paratuberculosis (strain ATCC BAA-968 / K-10) (Mycobacterium paratuberculosis), this protein is S-adenosylmethionine synthase.